A 232-amino-acid chain; its full sequence is Ribonuclease 3 (232 aa).

The 128-residue stretch at 6–133 (LKEIEENLGV…IIAAVYLDKG (128 aa)) folds into the RNase III domain. A Mg(2+)-binding site is contributed by E46. Residue D50 is part of the active site. 2 residues coordinate Mg(2+): D119 and E122. E122 is a catalytic residue. One can recognise a DRBM domain in the interval 160–229 (DFKTKLQELL…AKQALDILEG (70 aa)).

It belongs to the ribonuclease III family. In terms of assembly, homodimer. Requires Mg(2+) as cofactor.

The protein localises to the cytoplasm. The enzyme catalyses Endonucleolytic cleavage to 5'-phosphomonoester.. Digests double-stranded RNA. Involved in the processing of primary rRNA transcript to yield the immediate precursors to the large and small rRNAs (23S and 16S). Processes some mRNAs, and tRNAs when they are encoded in the rRNA operon. Processes pre-crRNA and tracrRNA of type II CRISPR loci if present in the organism. The chain is Ribonuclease 3 from Clostridium beijerinckii (strain ATCC 51743 / NCIMB 8052) (Clostridium acetobutylicum).